The following is a 474-amino-acid chain: Ribulose bisphosphate carboxylase large chain (474 aa).

An N-acetylproline modification is found at P2. K13 is subject to N6,N6,N6-trimethyllysine. Residues N122 and T172 each coordinate substrate. K174 (proton acceptor) is an active-site residue. Position 176 (K176) interacts with substrate. 3 residues coordinate Mg(2+): K200, D202, and E203. The residue at position 200 (K200) is an N6-carboxylysine. H293 (proton acceptor) is an active-site residue. Positions 294, 326, and 378 each coordinate substrate.

This sequence belongs to the RuBisCO large chain family. Type I subfamily. In terms of assembly, heterohexadecamer of 8 large chains and 8 small chains; disulfide-linked. The disulfide link is formed within the large subunit homodimers. Mg(2+) is required as a cofactor. In terms of processing, the disulfide bond which can form in the large chain dimeric partners within the hexadecamer appears to be associated with oxidative stress and protein turnover.

It is found in the plastid. The protein localises to the chloroplast. It catalyses the reaction 2 (2R)-3-phosphoglycerate + 2 H(+) = D-ribulose 1,5-bisphosphate + CO2 + H2O. The catalysed reaction is D-ribulose 1,5-bisphosphate + O2 = 2-phosphoglycolate + (2R)-3-phosphoglycerate + 2 H(+). Functionally, ruBisCO catalyzes two reactions: the carboxylation of D-ribulose 1,5-bisphosphate, the primary event in carbon dioxide fixation, as well as the oxidative fragmentation of the pentose substrate in the photorespiration process. Both reactions occur simultaneously and in competition at the same active site. This is Ribulose bisphosphate carboxylase large chain from Oltmannsiellopsis viridis (Marine flagellate).